We begin with the raw amino-acid sequence, 66 residues long: Small ribosomal subunit protein bS21 (66 aa).

It belongs to the bacterial ribosomal protein bS21 family.

This Rickettsia peacockii (strain Rustic) protein is Small ribosomal subunit protein bS21.